The sequence spans 150 residues: uncharacterized protein (150 aa).

This is an uncharacterized protein from Methanocaldococcus jannaschii (strain ATCC 43067 / DSM 2661 / JAL-1 / JCM 10045 / NBRC 100440) (Methanococcus jannaschii).